A 361-amino-acid polypeptide reads, in one-letter code: Glutamate 5-kinase (361 aa).

ATP is bound at residue K14. Positions 54, 141, and 153 each coordinate substrate. Residues 277–355 (KGAVIINQGA…KGLKPVIHYD (79 aa)) enclose the PUA domain.

This sequence belongs to the glutamate 5-kinase family.

The protein localises to the cytoplasm. The enzyme catalyses L-glutamate + ATP = L-glutamyl 5-phosphate + ADP. Its pathway is amino-acid biosynthesis; L-proline biosynthesis; L-glutamate 5-semialdehyde from L-glutamate: step 1/2. Its function is as follows. Catalyzes the transfer of a phosphate group to glutamate to form L-glutamate 5-phosphate. In Chlorobaculum tepidum (strain ATCC 49652 / DSM 12025 / NBRC 103806 / TLS) (Chlorobium tepidum), this protein is Glutamate 5-kinase.